The primary structure comprises 555 residues: CTP synthase (555 aa).

The tract at residues 1–271 is amidoligase domain; sequence MVKRGKKTKY…DDKLAELFNI (271 aa). S19 is a CTP binding site. S19 contributes to the UTP binding site. Residues 20 to 25 and D77 contribute to the ATP site; that span reads SLGKGL. D77 and E145 together coordinate Mg(2+). CTP-binding positions include 152–154, 192–197, and K228; these read DIE and KTKPTQ. Residues 192 to 197 and K228 contribute to the UTP site; that span reads KTKPTQ. A Glutamine amidotransferase type-1 domain is found at 297–537; that stretch reads RIGIVGKYVE…VKAALEHRDA (241 aa). Position 358 (G358) interacts with L-glutamine. Residue C385 is the Nucleophile; for glutamine hydrolysis of the active site. L-glutamine contacts are provided by residues 386–389, E409, and R466; that span reads LGLQ. Catalysis depends on residues H510 and E512. The segment at 535 to 555 is disordered; that stretch reads RDAQQRQPPAEVKKLAVGKNG.

Belongs to the CTP synthase family. Homotetramer.

It catalyses the reaction UTP + L-glutamine + ATP + H2O = CTP + L-glutamate + ADP + phosphate + 2 H(+). It carries out the reaction L-glutamine + H2O = L-glutamate + NH4(+). The catalysed reaction is UTP + NH4(+) + ATP = CTP + ADP + phosphate + 2 H(+). It functions in the pathway pyrimidine metabolism; CTP biosynthesis via de novo pathway; CTP from UDP: step 2/2. Allosterically activated by GTP, when glutamine is the substrate; GTP has no effect on the reaction when ammonia is the substrate. The allosteric effector GTP functions by stabilizing the protein conformation that binds the tetrahedral intermediate(s) formed during glutamine hydrolysis. Inhibited by the product CTP, via allosteric rather than competitive inhibition. Its function is as follows. Catalyzes the ATP-dependent amination of UTP to CTP with either L-glutamine or ammonia as the source of nitrogen. Regulates intracellular CTP levels through interactions with the four ribonucleotide triphosphates. The chain is CTP synthase from Anaeromyxobacter dehalogenans (strain 2CP-1 / ATCC BAA-258).